The sequence spans 502 residues: Probable glycine dehydrogenase (decarboxylating) subunit 2 (502 aa).

Lysine 273 bears the N6-(pyridoxal phosphate)lysine mark.

It belongs to the GcvP family. C-terminal subunit subfamily. The glycine cleavage system is composed of four proteins: P, T, L and H. In this organism, the P 'protein' is a heterodimer of two subunits. The cofactor is pyridoxal 5'-phosphate.

It catalyses the reaction N(6)-[(R)-lipoyl]-L-lysyl-[glycine-cleavage complex H protein] + glycine + H(+) = N(6)-[(R)-S(8)-aminomethyldihydrolipoyl]-L-lysyl-[glycine-cleavage complex H protein] + CO2. Its function is as follows. The glycine cleavage system catalyzes the degradation of glycine. The P protein binds the alpha-amino group of glycine through its pyridoxal phosphate cofactor; CO(2) is released and the remaining methylamine moiety is then transferred to the lipoamide cofactor of the H protein. The sequence is that of Probable glycine dehydrogenase (decarboxylating) subunit 2 from Thermococcus onnurineus (strain NA1).